The following is a 214-amino-acid chain: Thiamine import ATP-binding protein ThiQ (214 aa).

In terms of domain architecture, ABC transporter spans 2-212 (IKLNTIFDYP…KNGQATEREI (211 aa)). 31–38 (GESGAGKS) contacts ATP.

Belongs to the ABC transporter superfamily. Thiamine importer (TC 3.A.1.19.1) family. The complex is composed of two ATP-binding proteins (ThiQ), two transmembrane proteins (ThiP) and a solute-binding protein (ThiB).

The protein resides in the cell inner membrane. It catalyses the reaction thiamine(out) + ATP + H2O = thiamine(in) + ADP + phosphate + H(+). Functionally, part of the ABC transporter complex ThiBPQ involved in thiamine import. Responsible for energy coupling to the transport system. This chain is Thiamine import ATP-binding protein ThiQ, found in Histophilus somni (strain 129Pt) (Haemophilus somnus).